A 307-amino-acid polypeptide reads, in one-letter code: Malate dehydrogenase (307 aa).

NAD(+)-binding positions include 8-13 and aspartate 33; that span reads GAGRVG. Positions 82 and 88 each coordinate substrate. NAD(+) is bound by residues asparagine 95 and 118–120; that span reads VSN. Substrate-binding residues include asparagine 120 and arginine 151. Histidine 175 serves as the catalytic Proton acceptor.

The protein belongs to the LDH/MDH superfamily. MDH type 3 family.

It catalyses the reaction (S)-malate + NAD(+) = oxaloacetate + NADH + H(+). Its function is as follows. Catalyzes the reversible oxidation of malate to oxaloacetate. This is Malate dehydrogenase from Thioalkalivibrio sulfidiphilus (strain HL-EbGR7).